A 255-amino-acid chain; its full sequence is Accessory gland-specific peptide 26Aa (255 aa).

An N-terminal signal peptide occupies residues 1 to 18; it reads MNQILLCSQILLLLFAVA. The disordered stretch occupies residues 86 to 110; that stretch reads PINNSKSRKNSSTLPSQILTDKPNQ. The span at 87–110 shows a compositional bias: polar residues; sequence INNSKSRKNSSTLPSQILTDKPNQ. N-linked (GlcNAc...) asparagine glycosylation is found at N88, N95, and N136. Disordered regions lie at residues 177-197 and 235-255; these read NAQNARKPTKSCKKRPSKDIA and NNPATDVPTGKSPSEGNPSTT. Over residues 183 to 192 the composition is skewed to basic residues; the sequence is KPTKSCKKRP. The span at 245 to 255 shows a compositional bias: polar residues; that stretch reads KSPSEGNPSTT.

It undergoes several cleavages as it is secreted and it is further processed in the recipient female. In terms of tissue distribution, main cells of the accessory glands of males.

Its subcellular location is the secreted. The protein resides in the extracellular space. This protein is transferred from male to female's hemolymph during mating, affecting egglaying and behavior after mating. The protein is Accessory gland-specific peptide 26Aa (Acp26Aa) of Drosophila simulans (Fruit fly).